Reading from the N-terminus, the 89-residue chain is DNA/RNA-binding protein Alba 2 (89 aa).

An N6-acetyllysine modification is found at K12.

The protein belongs to the histone-like Alba family. Post-translationally, acetylated. Acetylation at Lys-12 decreases DNA-binding affinity.

It localises to the cytoplasm. The protein resides in the chromosome. In terms of biological role, binds double-stranded DNA tightly but without sequence specificity. Involved in DNA compaction. The protein is DNA/RNA-binding protein Alba 2 of Saccharolobus shibatae (strain ATCC 51178 / DSM 5389 / JCM 8931 / NBRC 15437 / B12) (Sulfolobus shibatae).